A 480-amino-acid chain; its full sequence is MFS-type transporter oryF (480 aa).

Residues 1–10 show a composition bias toward basic and acidic residues; sequence MAEEVNERTR. The tract at residues 1-24 is disordered; sequence MAEEVNERTRLLSQSDDPSPSLEE. A compositionally biased stretch (low complexity) spans 11 to 22; sequence LLSQSDDPSPSL. 12 helical membrane-spanning segments follow: residues 41-61, 81-101, 107-127, 138-158, 170-190, 197-217, 264-284, 308-328, 351-371, 378-398, 415-435, and 443-463; these read LCIA…AIIV, AFVS…GPLS, ISLL…CAFA, FITG…IGDL, LYTL…AYIV, AIFA…LCTL, FLGT…LFGL, ALNY…TGSL, ILML…GWSA, IMPN…YQCI, GALT…APLI, and WGSS…PILL.

The protein belongs to the major facilitator superfamily.

Its subcellular location is the membrane. In terms of biological role, MFS-type transporter; part of the gene cluster that mediates the biosynthesis of oryzines, natural products with an unusual maleidride backbone. The sequence is that of MFS-type transporter oryF from Aspergillus oryzae (strain ATCC 42149 / RIB 40) (Yellow koji mold).